The sequence spans 842 residues: Glycogen phosphorylase, muscle form (842 aa).

At Ser-2 the chain carries N-acetylserine. Ser-15 carries the post-translational modification Phosphoserine; by PHK; in form phosphorylase A. Residues Asp-43 and Tyr-76 each coordinate AMP. Residues Tyr-204 and Tyr-227 each carry the phosphotyrosine modification. 310 to 319 (RRFKSSKFGC) lines the AMP pocket. Ser-430 carries the post-translational modification Phosphoserine. Residue Tyr-473 is modified to Phosphotyrosine. Ser-514 carries the post-translational modification Phosphoserine. At Lys-681 the chain carries N6-(pyridoxal phosphate)lysine. Phosphoserine is present on residues Ser-747 and Ser-748.

It belongs to the glycogen phosphorylase family. As to quaternary structure, homodimer. Homotetramer; to form the enzymatically active phosphorylase A. Pyridoxal 5'-phosphate serves as cofactor. Post-translationally, phosphorylation of Ser-15 converts phosphorylase B (unphosphorylated) to phosphorylase A.

The catalysed reaction is [(1-&gt;4)-alpha-D-glucosyl](n) + phosphate = [(1-&gt;4)-alpha-D-glucosyl](n-1) + alpha-D-glucose 1-phosphate. With respect to regulation, allosterically regulated through the non-covalent binding of metabolites, being activated by AMP and inhibited by ATP, ADP, and glucose-6-phosphate. The activity is also controlled by post-translational modifications including phosphorylation. Allosteric enzyme that catalyzes the rate-limiting step in glycogen catabolism, the phosphorolytic cleavage of glycogen to produce glucose-1-phosphate, and plays a central role in maintaining cellular and organismal glucose homeostasis. The chain is Glycogen phosphorylase, muscle form from Macaca fascicularis (Crab-eating macaque).